The sequence spans 301 residues: Uricase (301 aa).

Active-site charge relay system residues include Lys-11 and Thr-58. Residues Thr-58, Asp-59, Phe-160, Arg-177, Val-228, Gln-229, and Asn-255 each contribute to the urate site. Catalysis depends on His-257, which acts as the Charge relay system. Residues 299–301 carry the Microbody targeting signal motif; sequence AKL.

Belongs to the uricase family.

The protein localises to the peroxisome. The enzyme catalyses urate + O2 + H2O = 5-hydroxyisourate + H2O2. The protein operates within purine metabolism; urate degradation; (S)-allantoin from urate: step 1/3. Catalyzes the oxidation of uric acid to 5-hydroxyisourate, which is further processed to form (S)-allantoin. The sequence is that of Uricase (uaZ) from Emericella nidulans (strain FGSC A4 / ATCC 38163 / CBS 112.46 / NRRL 194 / M139) (Aspergillus nidulans).